The following is a 165-amino-acid chain: Chorismate pyruvate-lyase (165 aa).

Positions 35, 77, 115, and 156 each coordinate substrate.

This sequence belongs to the UbiC family. Monomer.

It localises to the cytoplasm. The enzyme catalyses chorismate = 4-hydroxybenzoate + pyruvate. It functions in the pathway cofactor biosynthesis; ubiquinone biosynthesis. Its function is as follows. Removes the pyruvyl group from chorismate, with concomitant aromatization of the ring, to provide 4-hydroxybenzoate (4HB) for the ubiquinone pathway. This chain is Chorismate pyruvate-lyase, found in Escherichia coli O157:H7.